A 1252-amino-acid chain; its full sequence is DNA-directed RNA polymerase subunit beta (1252 aa).

The protein belongs to the RNA polymerase beta chain family. As to quaternary structure, the RNAP catalytic core consists of 2 alpha, 1 beta, 1 beta' and 1 omega subunit. When a sigma factor is associated with the core the holoenzyme is formed, which can initiate transcription.

It carries out the reaction RNA(n) + a ribonucleoside 5'-triphosphate = RNA(n+1) + diphosphate. In terms of biological role, DNA-dependent RNA polymerase catalyzes the transcription of DNA into RNA using the four ribonucleoside triphosphates as substrates. This Chlamydia trachomatis serovar D (strain ATCC VR-885 / DSM 19411 / UW-3/Cx) protein is DNA-directed RNA polymerase subunit beta.